A 198-amino-acid chain; its full sequence is Phosphoheptose isomerase (198 aa).

An SIS domain is found at 36–195; that stretch reads AIEVYQNGNK…EEAIFRNKFV (160 aa). A substrate-binding site is contributed by 51–53; sequence NGG. Residues His60 and Glu64 each coordinate Zn(2+). Residues Glu64, 93–94, 119–121, Ser124, and Gln171 contribute to the substrate site; these read ND and STS. 2 residues coordinate Zn(2+): Gln171 and His179.

The protein belongs to the SIS family. GmhA subfamily. The cofactor is Zn(2+).

The protein localises to the cytoplasm. The enzyme catalyses 2 D-sedoheptulose 7-phosphate = D-glycero-alpha-D-manno-heptose 7-phosphate + D-glycero-beta-D-manno-heptose 7-phosphate. It functions in the pathway carbohydrate biosynthesis; D-glycero-D-manno-heptose 7-phosphate biosynthesis; D-glycero-alpha-D-manno-heptose 7-phosphate and D-glycero-beta-D-manno-heptose 7-phosphate from sedoheptulose 7-phosphate: step 1/1. The protein operates within cell surface structure biogenesis; S-layer biogenesis. Functionally, catalyzes the isomerization of sedoheptulose 7-phosphate in D-glycero-D-manno-heptose 7-phosphate. The chain is Phosphoheptose isomerase from Aneurinibacillus thermoaerophilus.